A 260-amino-acid polypeptide reads, in one-letter code: 3'-5' ssDNA/RNA exonuclease TatD (260 aa).

Glu91, His127, and His152 together coordinate a divalent metal cation.

Belongs to the metallo-dependent hydrolases superfamily. TatD-type hydrolase family. TatD subfamily. In terms of assembly, monomer. The cofactor is Mg(2+).

The protein localises to the cytoplasm. Its function is as follows. 3'-5' exonuclease that prefers single-stranded DNA and RNA. May play a role in the H(2)O(2)-induced DNA damage repair. The protein is 3'-5' ssDNA/RNA exonuclease TatD of Salmonella typhimurium (strain LT2 / SGSC1412 / ATCC 700720).